A 548-amino-acid chain; its full sequence is Elongator complex protein 3 (548 aa).

The Radical SAM core domain occupies 83-373; sequence RTASGIAVVA…YRVQRDIPMP (291 aa). Cys100, Cys110, and Cys113 together coordinate [4Fe-4S] cluster. Residues Lys165, 475–478, 498–500, and Tyr531 each bind acetyl-CoA; these read ELHV and FGM. The 152-residue stretch at 397–548 folds into the N-acetyltransferase domain; it reads TECRDVRTRE…EGPYMVKNLY (152 aa).

It belongs to the ELP3 family. In terms of assembly, component of the elongator complex. The cofactor is [4Fe-4S] cluster.

The protein localises to the cytoplasm. The protein resides in the nucleus. It catalyses the reaction uridine(34) in tRNA + acetyl-CoA + S-adenosyl-L-methionine + H2O = 5-(carboxymethyl)uridine(34) in tRNA + 5'-deoxyadenosine + L-methionine + CoA + 2 H(+). Its pathway is tRNA modification; 5-methoxycarbonylmethyl-2-thiouridine-tRNA biosynthesis. In terms of biological role, catalytic tRNA acetyltransferase subunit of the elongator complex which is required for multiple tRNA modifications, including mcm5U (5-methoxycarbonylmethyl uridine), mcm5s2U (5-methoxycarbonylmethyl-2-thiouridine), and ncm5U (5-carbamoylmethyl uridine). In the elongator complex, acts as a tRNA uridine(34) acetyltransferase by mediating formation of carboxymethyluridine in the wobble base at position 34 in tRNAs. Involved in neurogenesis. Involved in somite development. This chain is Elongator complex protein 3, found in Danio rerio (Zebrafish).